The sequence spans 221 residues: Thiopurine S-methyltransferase (221 aa).

S-adenosyl-L-methionine-binding residues include W12, L47, E68, and R125.

This sequence belongs to the class I-like SAM-binding methyltransferase superfamily. TPMT family.

Its subcellular location is the cytoplasm. The enzyme catalyses S-adenosyl-L-methionine + a thiopurine = S-adenosyl-L-homocysteine + a thiopurine S-methylether.. The protein is Thiopurine S-methyltransferase of Legionella pneumophila (strain Corby).